Here is a 338-residue protein sequence, read N- to C-terminus: Glycerol-3-phosphate dehydrogenase [NAD(P)+] 1 (338 aa).

Residues Ser-11, Trp-12, His-32, Arg-33, and Lys-109 each contribute to the NADPH site. Residues Lys-109, Gly-140, and Ser-142 each contribute to the sn-glycerol 3-phosphate site. Residue Ala-144 participates in NADPH binding. Sn-glycerol 3-phosphate-binding residues include Lys-195, Asp-248, Ser-258, Arg-259, and Asn-260. The Proton acceptor role is filled by Lys-195. Arg-259 is a binding site for NADPH. Residues Val-283 and Glu-285 each contribute to the NADPH site.

This sequence belongs to the NAD-dependent glycerol-3-phosphate dehydrogenase family.

It localises to the cytoplasm. The catalysed reaction is sn-glycerol 3-phosphate + NAD(+) = dihydroxyacetone phosphate + NADH + H(+). It carries out the reaction sn-glycerol 3-phosphate + NADP(+) = dihydroxyacetone phosphate + NADPH + H(+). The protein operates within membrane lipid metabolism; glycerophospholipid metabolism. Its function is as follows. Catalyzes the reduction of the glycolytic intermediate dihydroxyacetone phosphate (DHAP) to sn-glycerol 3-phosphate (G3P), the key precursor for phospholipid synthesis. This chain is Glycerol-3-phosphate dehydrogenase [NAD(P)+] 1, found in Lactobacillus delbrueckii subsp. bulgaricus (strain ATCC 11842 / DSM 20081 / BCRC 10696 / JCM 1002 / NBRC 13953 / NCIMB 11778 / NCTC 12712 / WDCM 00102 / Lb 14).